The chain runs to 481 residues: Bindin (481 aa).

An N-terminal signal peptide occupies residues 1–20 (MGFHQILVTVVALALASVRA). The propeptide occupies 21–245 (EFPSRTDSPT…DSKRGARKKR (225 aa)). Basic and acidic residues-rich tracts occupy residues 154–163 (DGDLRKRRES) and 178–189 (RKGDEPAGHTLK). Disordered stretches follow at residues 154–193 (DGDL…DLAP) and 219–243 (GHSP…GARK). Residues 352 to 360 (LRHLRHHSN) are fucose-binding domain. The disordered stretch occupies residues 376-481 (SAMQEEEEEE…QPYGQGYLQG (106 aa)). Residues 379-389 (QEEEEEEEEDA) are compositionally biased toward acidic residues. A compositionally biased stretch (gly residues) spans 406 to 416 (AGFGGGGGGGA). 2 stretches are compositionally biased toward low complexity: residues 417-440 (MMSP…MGFP) and 464-481 (GMGM…YLQG).

It belongs to the bindin family.

The protein resides in the cytoplasmic vesicle. The protein localises to the secretory vesicle. It localises to the acrosome lumen. In terms of biological role, species-specific sea urchin sperm protein required for adhesion of sperm to the egg surface during fertilization. Bindin coats the acrosomal process after it is externalized by the acrosome reaction. It binds to sulfated, fucose-containing polysaccharides on the vitelline layer receptor proteoglycans which cover the egg plasma membrane. The chain is Bindin from Strongylocentrotus purpuratus (Purple sea urchin).